The sequence spans 247 residues: Probable transcriptional regulatory protein YPO2055/y2255/YP_1898 (247 aa).

It belongs to the TACO1 family.

It localises to the cytoplasm. In Yersinia pestis, this protein is Probable transcriptional regulatory protein YPO2055/y2255/YP_1898.